The following is a 444-amino-acid chain: 23S rRNA (uracil(1939)-C(5))-methyltransferase RlmD (444 aa).

Residues 5-67 (RNRFDRTPFQ…RHFDEAKTVE (63 aa)) enclose the TRAM domain. Cys-80, Cys-86, Cys-89, and Cys-168 together coordinate [4Fe-4S] cluster. S-adenosyl-L-methionine is bound by residues Gln-276, Phe-305, Asn-310, Glu-326, Asp-353, and Asp-374. Catalysis depends on Cys-400, which acts as the Nucleophile.

This sequence belongs to the class I-like SAM-binding methyltransferase superfamily. RNA M5U methyltransferase family. RlmD subfamily.

It carries out the reaction uridine(1939) in 23S rRNA + S-adenosyl-L-methionine = 5-methyluridine(1939) in 23S rRNA + S-adenosyl-L-homocysteine + H(+). Functionally, catalyzes the formation of 5-methyl-uridine at position 1939 (m5U1939) in 23S rRNA. This is 23S rRNA (uracil(1939)-C(5))-methyltransferase RlmD from Xanthomonas oryzae pv. oryzae (strain KACC10331 / KXO85).